The following is a 561-amino-acid chain: 4-coumarate--CoA ligase 3 (561 aa).

6 residues coordinate ATP: Ser213, Ser214, Gly215, Thr216, Thr217, and Lys221. (E)-4-coumaroyl-AMP is bound by residues Tyr263 and Ser267. Lys284 is a CoA binding site. Residues 286–355 (EIGALLDLIQ…RRLPQAILGQ (70 aa)) form an SBD1 region. (E)-4-coumaroyl-AMP-binding residues include Ala333, Gln355, Gly356, Thr360, and Met368. Positions 355, 356, and 360 each coordinate ATP. Positions 356-423 (GYGMTEAGPV…IRGQQIMKEY (68 aa)) are SBD2. Asp444 and Arg459 together coordinate ATP. Lys461 and Lys465 together coordinate (E)-4-coumaroyl-AMP. CoA-binding residues include Lys467 and Gly468. Lys550 contributes to the ATP binding site.

This sequence belongs to the ATP-dependent AMP-binding enzyme family. The cofactor is Mg(2+). As to expression, preferentially expressed in leaves, flowers and siliques.

It carries out the reaction (E)-4-coumarate + ATP + CoA = (E)-4-coumaroyl-CoA + AMP + diphosphate. The catalysed reaction is (E)-caffeate + ATP + CoA = (E)-caffeoyl-CoA + AMP + diphosphate. It catalyses the reaction (E)-ferulate + ATP + CoA = (E)-feruloyl-CoA + AMP + diphosphate. The enzyme catalyses (E)-4-coumarate + ATP + H(+) = (E)-4-coumaroyl-AMP + diphosphate. It carries out the reaction (E)-4-coumaroyl-AMP + CoA = (E)-4-coumaroyl-CoA + AMP + H(+). The catalysed reaction is (E)-caffeate + ATP + H(+) = (E)-caffeoyl-AMP + diphosphate. It catalyses the reaction (E)-caffeoyl-AMP + CoA = (E)-caffeoyl-CoA + AMP + H(+). The enzyme catalyses (E)-ferulate + ATP + H(+) = (E)-feruloyl-AMP + diphosphate. It carries out the reaction (E)-feruloyl-AMP + CoA = (E)-feruloyl-CoA + AMP + H(+). Its pathway is phytoalexin biosynthesis; 3,4',5-trihydroxystilbene biosynthesis; 3,4',5-trihydroxystilbene from trans-4-coumarate: step 1/2. Its function is as follows. Produces CoA thioesters of a variety of hydroxy- and methoxy-substituted cinnamic acids, which are used to synthesize several phenylpropanoid-derived compounds, including anthocyanins, flavonoids, isoflavonoids, coumarins, lignin, suberin and wall-bound phenolics. Follows a two-step reaction mechanism, wherein the carboxylate substrate first undergoes adenylation by ATP, followed by a thioesterification in the presence of CoA to yield the final CoA thioesters. This chain is 4-coumarate--CoA ligase 3, found in Arabidopsis thaliana (Mouse-ear cress).